Here is a 706-residue protein sequence, read N- to C-terminus: D-(-)-3-hydroxybutyrate oligomer hydrolase (706 aa).

Residues 1-27 form the signal peptide; it reads MTIIIAGKNTLTLTSLAAAVLALGACG. Serine 311 functions as the Charge relay system in the catalytic mechanism.

It belongs to the D-(-)-3-hydroxybutyrate oligomer hydrolase family.

It is found in the secreted. It carries out the reaction (3R)-hydroxybutanoate dimer + H2O = 2 (R)-3-hydroxybutanoate + H(+). Its pathway is lipid metabolism; butanoate metabolism. Functionally, participates in the degradation of poly-3-hydroxybutyrate (PHB). It works downstream of poly(3-hydroxybutyrate) depolymerase, hydrolyzing D(-)-3-hydroxybutyrate oligomers of various length (3HB-oligomers) into 3HB-monomers. The sequence is that of D-(-)-3-hydroxybutyrate oligomer hydrolase from Polaromonas naphthalenivorans (strain CJ2).